We begin with the raw amino-acid sequence, 2596 residues long: Protein unc-79 homolog (2596 aa).

Phosphoserine is present on residues Ser-754 and Ser-758. Disordered stretches follow at residues 907-931, 1539-1573, 1594-1632, 1648-1679, 1695-1832, and 1863-1909; these read GPEG…TVPS, SQRQ…GFQE, VDSP…DSDS, EEEE…SVLS, KDFS…FKIQ, and LGEQ…KQIQ. A compositionally biased stretch (basic and acidic residues) spans 1594–1606; it reads VDSPGKPAPREDL. A compositionally biased stretch (low complexity) spans 1662–1679; sequence GNNAASSPSIPSQPSVLS. Residues 1704 to 1713 are compositionally biased toward polar residues; it reads NHQSASNEDS. The segment covering 1726–1735 has biased composition (basic and acidic residues); that stretch reads ELSKSEELRE. The span at 1897–1908 shows a compositional bias: polar residues; the sequence is ETSSHSSISKQI. The next 2 helical transmembrane spans lie at 2184 to 2204 and 2426 to 2446; these read LLSF…ELCG and CVLH…WTVY.

The protein belongs to the unc-79 family. In terms of assembly, NALCN complex consists of NALCN and auxiliary subunits, UNC79, UNC80 and NACL1. These auxiliary subunits are essential for the NALCN channel function. UNC80 bridges NALCN to UNC79. Interacts with NALCN. Interacts with UNC80.

It is found in the cell membrane. Auxiliary subunit of the NALCN sodium channel complex. The NALCN sodium channel complex is a voltage-gated ion channel responsible for the resting Na(+) permeability that controls neuronal excitability. Activated by neuropeptides substance P, neurotensin, and extracellular calcium that regulates neuronal excitability by controlling the sizes of NALCN-dependent sodium-leak current. In Mus musculus (Mouse), this protein is Protein unc-79 homolog (Unc79).